Reading from the N-terminus, the 298-residue chain is 1D-myo-inositol 2-acetamido-2-deoxy-alpha-D-glucopyranoside deacetylase (298 aa).

The Zn(2+) site is built by His-14, Asp-17, and His-148. A disordered region spans residues Arg-277–Thr-298.

It belongs to the MshB deacetylase family. Zn(2+) is required as a cofactor.

The enzyme catalyses 1D-myo-inositol 2-acetamido-2-deoxy-alpha-D-glucopyranoside + H2O = 1D-myo-inositol 2-amino-2-deoxy-alpha-D-glucopyranoside + acetate. Its function is as follows. Catalyzes the deacetylation of 1D-myo-inositol 2-acetamido-2-deoxy-alpha-D-glucopyranoside (GlcNAc-Ins) in the mycothiol biosynthesis pathway. This Nocardia farcinica (strain IFM 10152) protein is 1D-myo-inositol 2-acetamido-2-deoxy-alpha-D-glucopyranoside deacetylase.